A 144-amino-acid polypeptide reads, in one-letter code: Large ribosomal subunit protein uL15 (144 aa).

The segment at 1-49 is disordered; sequence MIKLECLQDPSPRKRRTKLLGRGPSSGHGKTSSRGHKGDCSRSGYKRRF.

The protein belongs to the universal ribosomal protein uL15 family. As to quaternary structure, part of the 50S ribosomal subunit.

Its function is as follows. Binds to the 23S rRNA. The polypeptide is Large ribosomal subunit protein uL15 (Chlamydia trachomatis serovar A (strain ATCC VR-571B / DSM 19440 / HAR-13)).